Consider the following 36-residue polypeptide: Mu-agatoxin-Aa1a (36 aa).

4 disulfides stabilise this stretch: cysteine 2–cysteine 17, cysteine 9–cysteine 22, cysteine 16–cysteine 32, and cysteine 24–cysteine 30. Asparagine amide is present on asparagine 36.

Belongs to the neurotoxin 07 (Beta/delta-agtx) family. 04 (aga-5) subfamily. Expressed by the venom gland.

The protein localises to the secreted. Functionally, insecticidal neurotoxin that induces an irreversible spastic paralysis when injected into insects. Modifies presynaptic voltage-gated sodium channels (Nav), causing them to open at the normal resting potential of the nerve. This leads to spontaneous release of neurotransmitter and repetitive action potentials in motor neurons. This is Mu-agatoxin-Aa1a from Agelenopsis aperta (North American funnel-web spider).